Reading from the N-terminus, the 256-residue chain is MSDSAVATSASPVAAPPATVEKKVVQKKASGSAGTKAKKASATPSHPPTQQMVDASIKNLKERGGSSLLAIKKYITATYKCDAQKLAPFIKKYLKSAVVNGKLIQTKGKGASGSFKLSASAKKEKDPKAKSKVLSAEKKVQSKKVASKKIGVSSKKTAVGAADKKPKAKKAVATKKTAENKKTEKAKAKDAKKTGIIKSKPAATKAKVTAAKPKAVVAKASKAKPAVSAKPKKTVKKASVSATAKKPKAKTTAAKK.

Low complexity-rich tracts occupy residues 1 to 19 (MSDS…PPAT) and 27 to 43 (KKAS…ASAT). Disordered regions lie at residues 1-53 (MSDS…QQMV) and 108-256 (GKGA…AAKK). S11 is subject to Phosphoserine. Residues 45-119 (SHPPTQQMVD…GASGSFKLSA (75 aa)) form the H15 domain. 2 stretches are compositionally biased toward basic and acidic residues: residues 121 to 140 (AKKE…EKKV) and 176 to 193 (KTAE…DAKK). Residues 194 to 229 (TGIIKSKPAATKAKVTAAKPKAVVAKASKAKPAVSA) show a composition bias toward low complexity. Over residues 245 to 256 (KKPKAKTTAAKK) the composition is skewed to basic residues.

This sequence belongs to the histone H1/H5 family. Phosphorylated in oocytes during prophase I of meiosis.

The protein resides in the nucleus. Its subcellular location is the chromosome. Functionally, histones H1 are necessary for the condensation of nucleosome chains into higher-order structures. In Drosophila melanogaster (Fruit fly), this protein is Histone H1 (His1).